Reading from the N-terminus, the 186-residue chain is Probable nicotinate-nucleotide adenylyltransferase (186 aa).

It belongs to the NadD family.

It carries out the reaction nicotinate beta-D-ribonucleotide + ATP + H(+) = deamido-NAD(+) + diphosphate. Its pathway is cofactor biosynthesis; NAD(+) biosynthesis; deamido-NAD(+) from nicotinate D-ribonucleotide: step 1/1. In terms of biological role, catalyzes the reversible adenylation of nicotinate mononucleotide (NaMN) to nicotinic acid adenine dinucleotide (NaAD). This is Probable nicotinate-nucleotide adenylyltransferase from Tropheryma whipplei (strain TW08/27) (Whipple's bacillus).